Reading from the N-terminus, the 433-residue chain is Cell division control protein KAR1 (433 aa).

3 disordered regions span residues methionine 1–leucine 38, threonine 69–glycine 101, and lysine 207–arginine 227. Position 233 is a phosphothreonine (threonine 233).

In terms of assembly, interacts with SPC72.

It localises to the cytoplasm. The protein localises to the cytoskeleton. It is found in the microtubule organizing center. The protein resides in the spindle pole body. In terms of biological role, KAR1 is required for function of both intranuclear and extranuclear microtubules. KAR1 helps localize CDC31 to the spindle pole body (SPB), CDC31 then initiates SPB duplication via interaction with a downstream effector. The polypeptide is Cell division control protein KAR1 (KAR1) (Saccharomyces cerevisiae (strain ATCC 204508 / S288c) (Baker's yeast)).